The primary structure comprises 625 residues: 1-deoxy-D-xylulose-5-phosphate synthase (625 aa).

Residues His80 and 121-123 each bind thiamine diphosphate; that span reads GHS. Asp152 contacts Mg(2+). Thiamine diphosphate is bound by residues 153-154, Asn181, Tyr290, and Glu371; that span reads GA. Asn181 provides a ligand contact to Mg(2+).

The protein belongs to the transketolase family. DXPS subfamily. In terms of assembly, homodimer. The cofactor is Mg(2+). Thiamine diphosphate is required as a cofactor.

The enzyme catalyses D-glyceraldehyde 3-phosphate + pyruvate + H(+) = 1-deoxy-D-xylulose 5-phosphate + CO2. The protein operates within metabolic intermediate biosynthesis; 1-deoxy-D-xylulose 5-phosphate biosynthesis; 1-deoxy-D-xylulose 5-phosphate from D-glyceraldehyde 3-phosphate and pyruvate: step 1/1. Its function is as follows. Catalyzes the acyloin condensation reaction between C atoms 2 and 3 of pyruvate and glyceraldehyde 3-phosphate to yield 1-deoxy-D-xylulose-5-phosphate (DXP). In Haemophilus influenzae (strain ATCC 51907 / DSM 11121 / KW20 / Rd), this protein is 1-deoxy-D-xylulose-5-phosphate synthase.